A 323-amino-acid chain; its full sequence is Sphingolipid delta(4)-desaturase DES1 (323 aa).

Gly2 carries N-myristoyl glycine lipidation. The next 2 helical transmembrane spans lie at 41–61 (HNLIWIVAMMLLVQLASFYLV) and 68–88 (WVIFWSYVFGSCLNHSMTLAI). The short motif at 89–93 (HEISH) is the Histidine box-1 element. Residues 104–124 (WNRWFGMFANLSLGVPYSISF) traverse the membrane as a helical segment. Positions 128 to 132 (HMDHH) match the Histidine box-2 motif. The next 3 helical transmembrane spans lie at 152–172 (FFCTTFRKFVWVILQPLFYAF), 184–204 (YLEIINTVIQITFDIIIYYVF), and 209–229 (LVYMLAATLLGLGLHPISGHF). Positions 259–263 (HNEHH) match the Histidine box-3 motif. The residue at position 307 (Ser307) is a Phosphoserine.

It belongs to the fatty acid desaturase type 1 family. DEGS subfamily. Interacts with RLBP1; the interaction increases synthesis of chromophore-precursors by DEGS1. Post-translationally, myristoylation can target the enzyme to the mitochondria leading to an increase in ceramide levels. In terms of tissue distribution, detected in testis. Detected in pachytene spermatocytes and round spermatids. Expressed in retina and retinal pigment epithelium by Mueller cells (at protein level).

It localises to the mitochondrion membrane. It is found in the endoplasmic reticulum membrane. It carries out the reaction an N-acylsphinganine + 2 Fe(II)-[cytochrome b5] + O2 + 2 H(+) = an N-acylsphing-4-enine + 2 Fe(III)-[cytochrome b5] + 2 H2O. It catalyses the reaction all-trans-retinol = 11-cis-retinol. The catalysed reaction is all-trans-retinol = 9-cis-retinol. The enzyme catalyses all-trans-retinol = 13-cis-retinol. It carries out the reaction 11-cis-retinol = 13-cis-retinol. It catalyses the reaction 11-cis-retinol = 9-cis-retinol. Its function is as follows. Has sphingolipid-delta-4-desaturase activity. Converts D-erythro-sphinganine to D-erythro-sphingosine (E-sphing-4-enine). Catalyzes the equilibrium isomerization of retinols. The chain is Sphingolipid delta(4)-desaturase DES1 from Mus musculus (Mouse).